Consider the following 211-residue polypeptide: RING finger protein 222 (211 aa).

The RING-type zinc finger occupies 14–65; that stretch reads CPVCYEKFRDLDGASRTLSCGHVFCHDCLVKYLLSTRVDGQVQRTIVCPICR. Residues 187–207 form a helical membrane-spanning segment; it reads LITLIAVVAVVAAILPWVLLV.

Its subcellular location is the membrane. In Mus musculus (Mouse), this protein is RING finger protein 222 (Rnf222).